The sequence spans 143 residues: Large ribosomal subunit protein uL11 (143 aa).

Belongs to the universal ribosomal protein uL11 family. Part of the ribosomal stalk of the 50S ribosomal subunit. Interacts with L10 and the large rRNA to form the base of the stalk. L10 forms an elongated spine to which L12 dimers bind in a sequential fashion forming a multimeric L10(L12)X complex. In terms of processing, one or more lysine residues are methylated.

Its function is as follows. Forms part of the ribosomal stalk which helps the ribosome interact with GTP-bound translation factors. The polypeptide is Large ribosomal subunit protein uL11 (Pseudomonas fluorescens (strain Pf0-1)).